The primary structure comprises 650 residues: Acetyl-coenzyme A synthetase (650 aa).

CoA-binding positions include 191 to 194, Thr311, and Asn335; that span reads RGGR. Residues 387-389, 411-416, Asp500, and Arg515 contribute to the ATP site; these read GEP and DTWWQT. Ser523 serves as a coordination point for CoA. Arg526 is an ATP binding site. Residues Val537, His539, and Val542 each contribute to the Mg(2+) site. Arg584 is a binding site for CoA. Position 609 is an N6-acetyllysine (Lys609).

It belongs to the ATP-dependent AMP-binding enzyme family. Mg(2+) is required as a cofactor. Acetylated. Deacetylation by the SIR2-homolog deacetylase activates the enzyme.

It carries out the reaction acetate + ATP + CoA = acetyl-CoA + AMP + diphosphate. Functionally, catalyzes the conversion of acetate into acetyl-CoA (AcCoA), an essential intermediate at the junction of anabolic and catabolic pathways. AcsA undergoes a two-step reaction. In the first half reaction, AcsA combines acetate with ATP to form acetyl-adenylate (AcAMP) intermediate. In the second half reaction, it can then transfer the acetyl group from AcAMP to the sulfhydryl group of CoA, forming the product AcCoA. This is Acetyl-coenzyme A synthetase from Shewanella sediminis (strain HAW-EB3).